We begin with the raw amino-acid sequence, 360 residues long: WD repeat domain phosphoinositide-interacting protein 4 (360 aa).

7 WD repeats span residues 1–34, 40–84, 92–128, 133–174, 183–222, 227–266, and 284–329; these read MTQQ…IYNV, KGHL…IWDD, KEKL…VYSF, RKLF…LVDL, SAPF…LFDT, KLVE…IFAL, and GPMI…ICVD. Residues 231 to 234 carry the L/FRRG motif motif; the sequence is LRRG.

Belongs to the WD repeat PROPPIN family. As to quaternary structure, interacts with WIPI1. Interacts with WIPI2. Interacts with ATG2A and ATG2B. Interacts with ULK1. May interact with the PRKAA1, PRKAA2, PRKAB1 and PRKAG1 subunits of the AMPK kinase. May interact with NUDC. As to expression, ubiquitously expressed, with high expression in skeletal muscle and heart. Weakly expressed in liver and placenta. Expression is down-regulated in pancreatic and in kidney tumors.

Its subcellular location is the preautophagosomal structure. The protein localises to the cytoplasm. Activated upon amino-acid starvation. Its function is as follows. Component of the autophagy machinery that controls the major intracellular degradation process by which cytoplasmic materials are packaged into autophagosomes and delivered to lysosomes for degradation. Binds phosphatidylinositol 3-phosphate (PtdIns3P). Activated by the STK11/AMPK signaling pathway upon starvation, WDR45 is involved in autophagosome assembly downstream of WIPI2, regulating the size of forming autophagosomes. Together with WIPI1, promotes ATG2 (ATG2A or ATG2B)-mediated lipid transfer by enhancing ATG2-association with phosphatidylinositol 3-monophosphate (PI3P)-containing membranes. Probably recruited to membranes through its PtdIns3P activity. This chain is WD repeat domain phosphoinositide-interacting protein 4 (WDR45), found in Homo sapiens (Human).